A 303-amino-acid chain; its full sequence is Ribosomal RNA small subunit methyltransferase H (303 aa).

Residues 32 to 34, Asp52, Phe78, Asp99, and Gln106 contribute to the S-adenosyl-L-methionine site; that span reads GGH.

The protein belongs to the methyltransferase superfamily. RsmH family.

Its subcellular location is the cytoplasm. The enzyme catalyses cytidine(1402) in 16S rRNA + S-adenosyl-L-methionine = N(4)-methylcytidine(1402) in 16S rRNA + S-adenosyl-L-homocysteine + H(+). In terms of biological role, specifically methylates the N4 position of cytidine in position 1402 (C1402) of 16S rRNA. The protein is Ribosomal RNA small subunit methyltransferase H of Acinetobacter baylyi (strain ATCC 33305 / BD413 / ADP1).